The sequence spans 49 residues: Large ribosomal subunit protein bL33B (49 aa).

Belongs to the bacterial ribosomal protein bL33 family.

The sequence is that of Large ribosomal subunit protein bL33B (rpmG2) from Staphylococcus epidermidis (strain ATCC 12228 / FDA PCI 1200).